A 485-amino-acid polypeptide reads, in one-letter code: UDP-N-acetylmuramoyl-L-alanyl-D-glutamate--2,6-diaminopimelate ligase (485 aa).

The UDP-N-acetyl-alpha-D-muramoyl-L-alanyl-D-glutamate site is built by L27 and S29. 106 to 112 (GTSGKTS) is a binding site for ATP. UDP-N-acetyl-alpha-D-muramoyl-L-alanyl-D-glutamate-binding positions include 148-149 (TT), S175, Q181, and R183. The residue at position 215 (K215) is an N6-carboxylysine. Meso-2,6-diaminopimelate contacts are provided by residues R382, 406–409 (DNPR), G454, and E458. Positions 406–409 (DNPR) match the Meso-diaminopimelate recognition motif motif.

The protein belongs to the MurCDEF family. MurE subfamily. Mg(2+) is required as a cofactor. In terms of processing, carboxylation is probably crucial for Mg(2+) binding and, consequently, for the gamma-phosphate positioning of ATP.

The protein localises to the cytoplasm. It carries out the reaction UDP-N-acetyl-alpha-D-muramoyl-L-alanyl-D-glutamate + meso-2,6-diaminopimelate + ATP = UDP-N-acetyl-alpha-D-muramoyl-L-alanyl-gamma-D-glutamyl-meso-2,6-diaminopimelate + ADP + phosphate + H(+). The protein operates within cell wall biogenesis; peptidoglycan biosynthesis. In terms of biological role, catalyzes the addition of meso-diaminopimelic acid to the nucleotide precursor UDP-N-acetylmuramoyl-L-alanyl-D-glutamate (UMAG) in the biosynthesis of bacterial cell-wall peptidoglycan. The chain is UDP-N-acetylmuramoyl-L-alanyl-D-glutamate--2,6-diaminopimelate ligase from Bradyrhizobium diazoefficiens (strain JCM 10833 / BCRC 13528 / IAM 13628 / NBRC 14792 / USDA 110).